A 429-amino-acid polypeptide reads, in one-letter code: 3-phosphoshikimate 1-carboxyvinyltransferase (429 aa).

The 3-phosphoshikimate site is built by lysine 23, serine 24, and arginine 28. Position 23 (lysine 23) interacts with phosphoenolpyruvate. 2 residues coordinate phosphoenolpyruvate: glycine 95 and arginine 123. 3-phosphoshikimate contacts are provided by serine 168, glutamine 170, aspartate 316, and lysine 343. Glutamine 170 is a phosphoenolpyruvate binding site. Aspartate 316 (proton acceptor) is an active-site residue. Phosphoenolpyruvate is bound by residues arginine 347 and arginine 389.

The protein belongs to the EPSP synthase family. As to quaternary structure, monomer.

It is found in the cytoplasm. The catalysed reaction is 3-phosphoshikimate + phosphoenolpyruvate = 5-O-(1-carboxyvinyl)-3-phosphoshikimate + phosphate. The protein operates within metabolic intermediate biosynthesis; chorismate biosynthesis; chorismate from D-erythrose 4-phosphate and phosphoenolpyruvate: step 6/7. In terms of biological role, catalyzes the transfer of the enolpyruvyl moiety of phosphoenolpyruvate (PEP) to the 5-hydroxyl of shikimate-3-phosphate (S3P) to produce enolpyruvyl shikimate-3-phosphate and inorganic phosphate. This is 3-phosphoshikimate 1-carboxyvinyltransferase from Bacillus cereus (strain ZK / E33L).